A 1048-amino-acid chain; its full sequence is FERM, ARHGEF and pleckstrin domain-containing protein 1 (1048 aa).

Positions 1 to 37 are disordered; it reads MGEIEQKPTPASRLGAPENSGISTLERGQKPPPTPSG. Phosphoserine occurs at positions 20 and 23. At Thr-24 the chain carries Phosphothreonine. One can recognise an FERM domain in the interval 40 to 320; that stretch reads MTVKIQMLDD…EHHAFFRLFE (281 aa). Phosphoserine is present on residues Ser-340, Ser-373, Ser-389, Ser-403, Ser-427, Ser-433, and Ser-437. The segment at 361–536 is disordered; the sequence is FERKHSKIHS…TDDEEEGRRK (176 aa). The segment covering 371 to 395 has biased composition (polar residues); that stretch reads TRSLVSQPTAPNSEVPKQSPQSASL. 2 stretches are compositionally biased toward polar residues: residues 472–491 and 498–513; these read STGS…NSQG and VTLS…QASP. Ser-512 and Ser-516 each carry phosphoserine. The region spanning 542-733 is the DH domain; that stretch reads KAYYIAKEVS…TEMVAQLHGT (192 aa). One can recognise a PH 1 domain in the interval 762–859; sequence EFIRLGSLSK…WMEDIQMAID (98 aa). A phosphoserine mark is found at Ser-836, Ser-875, and Ser-881. The segment at 865–907 is disordered; sequence NGPTPELLASSPPDNKSPDEATAADQESEDDLSASRTSLERQA. Thr-886 bears the Phosphothreonine mark. A phosphoserine mark is found at Ser-892, Ser-899, and Ser-902. The region spanning 935–1032 is the PH 2 domain; it reads ENQLSGNLLR…WMEVIRSATS (98 aa).

In terms of assembly, interacts with CADM1. Interacts with RAC1. As to expression, detected in brain cortex, hippocampus, striatum, olfactory bulb, cerebellum and hindbrain (at protein level).

The protein resides in the cell membrane. The protein localises to the synapse. It is found in the synaptosome. It localises to the cytoplasm. Its subcellular location is the cytosol. The protein resides in the cell projection. The protein localises to the filopodium. It is found in the dendrite. It localises to the dendritic spine. Functions as a guanine nucleotide exchange factor for RAC1. May play a role in semaphorin signaling. Plays a role in the assembly and disassembly of dendritic filopodia, the formation of dendritic spines, regulation of dendrite length and ultimately the formation of synapses. The protein is FERM, ARHGEF and pleckstrin domain-containing protein 1 (Farp1) of Mus musculus (Mouse).